A 180-amino-acid polypeptide reads, in one-letter code: Crossover junction endodeoxyribonuclease RuvC (180 aa).

Active-site residues include Asp-7, Glu-66, and Asp-138. Residues Asp-7, Glu-66, and Asp-138 each contribute to the Mg(2+) site.

This sequence belongs to the RuvC family. As to quaternary structure, homodimer which binds Holliday junction (HJ) DNA. The HJ becomes 2-fold symmetrical on binding to RuvC with unstacked arms; it has a different conformation from HJ DNA in complex with RuvA. In the full resolvosome a probable DNA-RuvA(4)-RuvB(12)-RuvC(2) complex forms which resolves the HJ. Mg(2+) serves as cofactor.

Its subcellular location is the cytoplasm. It catalyses the reaction Endonucleolytic cleavage at a junction such as a reciprocal single-stranded crossover between two homologous DNA duplexes (Holliday junction).. Its function is as follows. The RuvA-RuvB-RuvC complex processes Holliday junction (HJ) DNA during genetic recombination and DNA repair. Endonuclease that resolves HJ intermediates. Cleaves cruciform DNA by making single-stranded nicks across the HJ at symmetrical positions within the homologous arms, yielding a 5'-phosphate and a 3'-hydroxyl group; requires a central core of homology in the junction. The consensus cleavage sequence is 5'-(A/T)TT(C/G)-3'. Cleavage occurs on the 3'-side of the TT dinucleotide at the point of strand exchange. HJ branch migration catalyzed by RuvA-RuvB allows RuvC to scan DNA until it finds its consensus sequence, where it cleaves and resolves the cruciform DNA. The polypeptide is Crossover junction endodeoxyribonuclease RuvC (Janthinobacterium sp. (strain Marseille) (Minibacterium massiliensis)).